A 530-amino-acid polypeptide reads, in one-letter code: UDP-glucuronosyltransferase 1A7 (530 aa).

Positions 1-25 (MARAGWTGLLPLYVCLLLTCGFAKA) are cleaved as a signal peptide. Residues Asn-71, Asn-292, and Asn-344 are each glycosylated (N-linked (GlcNAc...) asparagine). The chain crosses the membrane as a helical span at residues 488 to 504 (VIGFLLAVVLTVAFITF).

This sequence belongs to the UDP-glycosyltransferase family. In terms of assembly, homodimer. Homooligomer. Interacts with UGT1A1, UGT1A3, UGT1A4, UGT1A6, UGT1A8, UGT1A9 and UGT1A10 to form heterodimers. Isoform 1 interacts with isoform 2/i2 suggesting that oligomerization is involved in negative regulation of transferase activity by isoform 2. Isoform 1 also interacts with respective i2 isoforms of UGT1A1, UGT1A3, UGT1A4, UGT1A6, UGT1A8, UGT1A9 and UGT1A10. As to expression, liver and gastric tissue. Isoform 1 and isoform 2 are expressed in esophagus. Neither isoform is expressed in liver, kidney, colon and small intestine.

The protein resides in the endoplasmic reticulum membrane. It carries out the reaction glucuronate acceptor + UDP-alpha-D-glucuronate = acceptor beta-D-glucuronoside + UDP + H(+). It catalyses the reaction 17alpha-estradiol + UDP-alpha-D-glucuronate = 17alpha-estradiol 3-O-(beta-D-glucuronate) + UDP + H(+). The enzyme catalyses prunetin + UDP-alpha-D-glucuronate = prunetin-5-O-beta-D-glucuronide + UDP. The catalysed reaction is 5-epi-5-F2t-IsoP + UDP-alpha-D-glucuronate = 5-epi-5-F2t-IsoP-glucuronide + UDP + H(+). It carries out the reaction (E)-ferulate + UDP-alpha-D-glucuronate = (E)-ferulic acid beta-D-glucuronate ester + UDP. It catalyses the reaction candesartan + UDP-alpha-D-glucuronate = candesartan O-beta-D-glucuronoside + UDP. The enzyme catalyses SN-38 + UDP-alpha-D-glucuronate = SN-38 O-beta-D-glucuronide + UDP + H(+). The catalysed reaction is mycophenolate + UDP-alpha-D-glucuronate = mycophenolate 7-O-beta-D-glucuronide + UDP + H(+). UDP-glucuronosyltransferase (UGT) that catalyzes phase II biotransformation reactions in which lipophilic substrates are conjugated with glucuronic acid to increase the metabolite's water solubility, thereby facilitating excretion into either the urine or bile. Essential for the elimination and detoxification of drugs, xenobiotics and endogenous compounds. Catalyzes the glucuronidation of endogenous estrogen hormone epiestradiol. Involved in the glucuronidation of F2-isoprostane (5-epi-5-F2t-IsoP). Involved in the glucuronidation of the phytochemical ferulic acid at the carboxylic acid group. Also catalyzes the glucuronidation of the isoflavones genistein, daidzein, glycitein, formononetin, biochanin A and prunetin, which are phytoestrogens with anticancer and cardiovascular properties. Involved in the glucuronidation of the AGTR1 angiotensin receptor antagonist caderastan, a drug which can inhibit the effect of angiotensin II. Involved in the biotransformation of 7-ethyl-10-hydroxycamptothecin (SN-38), the pharmacologically active metabolite of the anticancer drug irinotecan. Also metabolizes mycophenolate, an immunosuppressive agent. In terms of biological role, lacks UGT glucuronidation activity but acts as a negative regulator of isoform 1. The sequence is that of UDP-glucuronosyltransferase 1A7 from Homo sapiens (Human).